Reading from the N-terminus, the 291-residue chain is 4-diphosphocytidyl-2-C-methyl-D-erythritol kinase (291 aa).

The active site involves lysine 14. Position 96-106 (96-106 (PFGAGLGGGSS)) interacts with ATP. Aspartate 138 is an active-site residue.

The protein belongs to the GHMP kinase family. IspE subfamily.

It catalyses the reaction 4-CDP-2-C-methyl-D-erythritol + ATP = 4-CDP-2-C-methyl-D-erythritol 2-phosphate + ADP + H(+). It functions in the pathway isoprenoid biosynthesis; isopentenyl diphosphate biosynthesis via DXP pathway; isopentenyl diphosphate from 1-deoxy-D-xylulose 5-phosphate: step 3/6. Functionally, catalyzes the phosphorylation of the position 2 hydroxy group of 4-diphosphocytidyl-2C-methyl-D-erythritol. The sequence is that of 4-diphosphocytidyl-2-C-methyl-D-erythritol kinase from Chlorobium phaeovibrioides (strain DSM 265 / 1930) (Prosthecochloris vibrioformis (strain DSM 265)).